We begin with the raw amino-acid sequence, 130 residues long: Transcription antitermination protein NusB (130 aa).

Belongs to the NusB family.

Functionally, involved in transcription antitermination. Required for transcription of ribosomal RNA (rRNA) genes. Binds specifically to the boxA antiterminator sequence of the ribosomal RNA (rrn) operons. The polypeptide is Transcription antitermination protein NusB (Geobacillus kaustophilus (strain HTA426)).